Reading from the N-terminus, the 168-residue chain is tRNA (cytidine(56)-2'-O)-methyltransferase (168 aa).

S-adenosyl-L-methionine is bound by residues leucine 79 and glycine 104–valine 108.

The protein belongs to the aTrm56 family. In terms of assembly, homodimer.

Its subcellular location is the cytoplasm. It carries out the reaction cytidine(56) in tRNA + S-adenosyl-L-methionine = 2'-O-methylcytidine(56) in tRNA + S-adenosyl-L-homocysteine + H(+). Its function is as follows. Specifically catalyzes the AdoMet-dependent 2'-O-ribose methylation of cytidine at position 56 in tRNAs. The chain is tRNA (cytidine(56)-2'-O)-methyltransferase from Archaeoglobus fulgidus (strain ATCC 49558 / DSM 4304 / JCM 9628 / NBRC 100126 / VC-16).